The chain runs to 217 residues: LSM12 homolog A (217 aa).

Residues 9–78 (VNAVNDCFSI…CSNVQVIKEC (70 aa)) form the Sm domain. The AD domain occupies 86-184 (QKLNLEQVKM…IIKQFFNTRP (99 aa)). Residues 185-217 (SPVPESGAAASTSSPSVSPTSSSLASGSPVPAN) are disordered. The span at 190-217 (SGAAASTSSPSVSPTSSSLASGSPVPAN) shows a compositional bias: low complexity.

It belongs to the LSM12 family. As to quaternary structure, component of the Atx2-tyf activator complex, composed of Atx2, tyf, pAbp, Lsm12a. Interacts with tyf, Atx2 and pAbp.

In terms of biological role, component of the Atx2-tyf activator complex which functions in the circadian pacemaker neurons to activate the TYF-dependent translation of per and maintain 24 hour periodicity in circadian behaviors. Within the Atx2-tyf complex, likely to function as a molecular adapter which stabilizes the interaction between Atx2 and the translational regulator tyf. The chain is LSM12 homolog A from Drosophila melanogaster (Fruit fly).